Reading from the N-terminus, the 369-residue chain is Proton-coupled zinc antiporter SLC30A8 (369 aa).

Topologically, residues 1–79 (MEFLERTYLV…AKWKLCSASA (79 aa)) are cytoplasmic. The tract at residues 31–52 (PVNKDQCPRERPEELESGGMYH) is disordered. The segment covering 32–44 (VNKDQCPRERPEE) has biased composition (basic and acidic residues). Positions 52, 53, and 54 each coordinate Zn(2+). The short motif at 52–54 (HCH) is the HCH Motif; seals regulatory zinc-binding pocket element. Residues 80–100 (ICFIFMIAEVVGGHIAGSLAV) traverse the membrane as a helical segment. Residues 101 to 103 (VTD) are Lumenal, vesicle-facing. The helical transmembrane segment at 104–124 (AAHLLIDLTSFLLSLFSLWLS) threads the bilayer. 3 residues coordinate Zn(2+): H106, D110, and H137. At 125-140 (SKPPSKRLTFGWHRAE) the chain is on the cytoplasmic side. Residues 141–161 (ILGALLSILCIWVVTGVLVYL) traverse the membrane as a helical segment. Over 162-175 (ACERLLYPDYQIQA) the chain is Lumenal, vesicle. Residues 176-196 (TVMIIVSSCAVAANIVLTVVL) traverse the membrane as a helical segment. Residues 197-217 (HQRCLGHNHKEVQANASVRAA) are Cytoplasmic-facing. A helical transmembrane segment spans residues 218–238 (FVHALGDLFQSISVLISALII). Zn(2+)-binding residues include H220 and D224. Residues 239-245 (YFKPEYK) lie on the Lumenal, vesicle side of the membrane. The chain crosses the membrane as a helical span at residues 246 to 266 (IADPICTFIFSILVLASTITI). The Cytoplasmic segment spans residues 267-369 (LKDFSILLME…DCLFCEDPCD (103 aa)). Residues H301, H318, H345, E352, C361, and C364 each contribute to the Zn(2+) site.

It belongs to the cation diffusion facilitator (CDF) transporter (TC 2.A.4) family. SLC30A subfamily. In terms of assembly, homodimer. As to expression, in the endocrine pancreas, expressed in insulin-producing beta cells. Expressed at relatively high levels in subcutaneous fat tissue from lean persons; much lower levels in visceral fat, whether from lean or obese individuals, and in subcutaneous fat tissue from obese individuals. Expressed in peripheral blood mononuclear cells, including T-cells and B-cells, with great variation among individuals ranging from negative to strongly positive.

The protein resides in the cytoplasmic vesicle. It is found in the secretory vesicle membrane. Its subcellular location is the cell membrane. It carries out the reaction Zn(2+)(in) + 2 H(+)(out) = Zn(2+)(out) + 2 H(+)(in). Functionally, proton-coupled zinc ion antiporter mediating the entry of zinc into the lumen of pancreatic beta cell secretory granules, thereby regulating insulin secretion. The polypeptide is Proton-coupled zinc antiporter SLC30A8 (Homo sapiens (Human)).